Consider the following 857-residue polypeptide: DNA mismatch repair protein MutS (857 aa).

608–615 contributes to the ATP binding site; the sequence is GPNMSGKS.

Belongs to the DNA mismatch repair MutS family.

Its function is as follows. This protein is involved in the repair of mismatches in DNA. It is possible that it carries out the mismatch recognition step. This protein has a weak ATPase activity. In Lactobacillus gasseri (strain ATCC 33323 / DSM 20243 / BCRC 14619 / CIP 102991 / JCM 1131 / KCTC 3163 / NCIMB 11718 / NCTC 13722 / AM63), this protein is DNA mismatch repair protein MutS.